The following is a 285-amino-acid chain: Gas vesicle protein C2 (285 aa).

6 consecutive repeat copies span residues 22-52, 53-84, 85-122, 123-155, 156-188, and 189-220. A 6 X approximate tandem repeats region spans residues 22–220; the sequence is EAMDAYAEEF…ADDTTAQTDV (199 aa).

This sequence belongs to the halobacterial gas vesicle GvpC family.

It localises to the gas vesicle. Its function is as follows. Confers stability, involved in shaping gas vesicles (GV), hollow, gas filled proteinaceous nanostructures. GVs allow positioning of halobacteria at an optimal depth for growth in the poorly aerated, shallow brine pools of their habitat. In terms of biological role, expression of 2 c-vac DNA fragments containing 2 divergently transcribed regions (gvpE-gvpF-gvpG-gvpH-gvpI-gvpJ-gvpK-gvpL-gvpM and gvpA-gvpC-gvpN-gvpO) allows H.volcanii to produce gas vesicles. In Halobacterium salinarum (strain ATCC 700922 / JCM 11081 / NRC-1) (Halobacterium halobium), this protein is Gas vesicle protein C2.